A 374-amino-acid chain; its full sequence is Putative G-protein coupled receptor-like protein B0244.6 (374 aa).

Over 1-54 (MTQNHYTTSIFANCSKHYEFEILLETCTNSTNPCHAVSQIQSAITIAYVDYYTS) the chain is Extracellular. Residues 55–75 (VALFSIAALLDIYCLIITIPL) form a helical membrane-spanning segment. Over 76–86 (YRRMKDDSKKK) the chain is Cytoplasmic. A helical membrane pass occupies residues 87 to 107 (YVFLITRCISGLLLVVAWLLI). Residues 108 to 137 (QCIYLRFIAPSQDNLPYYVLALALNIGSTY) are Extracellular-facing. A helical transmembrane segment spans residues 138-158 (VLLGSYVGMAGILYLGVLNPI). Over 159–169 (AFNQHLTLRIV) the chain is Cytoplasmic. A helical membrane pass occupies residues 170-190 (YIAVCIIFVISIFISIPLAIF). Topologically, residues 191–216 (QALMTVPTSSMSCTDTACAPLITLIN) are extracellular. Residues 217 to 237 (FVLVFGSLITTTLTLTFVLIS) traverse the membrane as a helical segment. At 238 to 262 (LCRHRKEFKKLDTTSNTSLNSAVRL) the chain is on the cytoplasmic side. The helical transmembrane segment at 263–283 (LKFTLFAVLLLVAAEVIPFVI) threads the bilayer. Residues 284–304 (SETKKKHSVVTGCYYFYHSGK) lie on the Extracellular side of the membrane. The chain crosses the membrane as a helical span at residues 305 to 325 (VIQYAVFALTESSIWSIALII). The Cytoplasmic portion of the chain corresponds to 326–374 (DPLINIIFDRTVSKKATDQVKWMRKSCVGLVRKVTKRSNPENFTETSEI).

This sequence belongs to the G-protein coupled receptor 1 family. B0244 subfamily.

It is found in the cell membrane. This is Putative G-protein coupled receptor-like protein B0244.6 from Caenorhabditis elegans.